A 159-amino-acid chain; its full sequence is Nucleotide-binding protein PSPPH_4093 (159 aa).

This sequence belongs to the YajQ family.

Nucleotide-binding protein. In Pseudomonas savastanoi pv. phaseolicola (strain 1448A / Race 6) (Pseudomonas syringae pv. phaseolicola (strain 1448A / Race 6)), this protein is Nucleotide-binding protein PSPPH_4093.